The following is a 320-amino-acid chain: Lipoyl synthase (320 aa).

Positions 1–11 (MGGMNDLSSTP) are enriched in polar residues. Positions 1-24 (MGGMNDLSSTPAPEGDRPARQRKP) are disordered. The segment covering 14–24 (EGDRPARQRKP) has biased composition (basic and acidic residues). [4Fe-4S] cluster-binding residues include C53, C58, C64, C79, C83, C86, and S293. The Radical SAM core domain occupies 65-282 (WTKKHATVMI…GAIARAKGFL (218 aa)).

Belongs to the radical SAM superfamily. Lipoyl synthase family. [4Fe-4S] cluster is required as a cofactor.

The protein resides in the cytoplasm. The catalysed reaction is [[Fe-S] cluster scaffold protein carrying a second [4Fe-4S](2+) cluster] + N(6)-octanoyl-L-lysyl-[protein] + 2 oxidized [2Fe-2S]-[ferredoxin] + 2 S-adenosyl-L-methionine + 4 H(+) = [[Fe-S] cluster scaffold protein] + N(6)-[(R)-dihydrolipoyl]-L-lysyl-[protein] + 4 Fe(3+) + 2 hydrogen sulfide + 2 5'-deoxyadenosine + 2 L-methionine + 2 reduced [2Fe-2S]-[ferredoxin]. It participates in protein modification; protein lipoylation via endogenous pathway; protein N(6)-(lipoyl)lysine from octanoyl-[acyl-carrier-protein]: step 2/2. In terms of biological role, catalyzes the radical-mediated insertion of two sulfur atoms into the C-6 and C-8 positions of the octanoyl moiety bound to the lipoyl domains of lipoate-dependent enzymes, thereby converting the octanoylated domains into lipoylated derivatives. In Erythrobacter litoralis (strain HTCC2594), this protein is Lipoyl synthase.